The following is a 415-amino-acid chain: Serine--tRNA ligase (415 aa).

T231–E233 provides a ligand contact to L-serine. R262–E264 provides a ligand contact to ATP. E285 serves as a coordination point for L-serine. E349–S352 contributes to the ATP binding site. S383 is an L-serine binding site.

Belongs to the class-II aminoacyl-tRNA synthetase family. Type-1 seryl-tRNA synthetase subfamily. Homodimer. The tRNA molecule binds across the dimer.

It localises to the cytoplasm. It catalyses the reaction tRNA(Ser) + L-serine + ATP = L-seryl-tRNA(Ser) + AMP + diphosphate + H(+). It carries out the reaction tRNA(Sec) + L-serine + ATP = L-seryl-tRNA(Sec) + AMP + diphosphate + H(+). It participates in aminoacyl-tRNA biosynthesis; selenocysteinyl-tRNA(Sec) biosynthesis; L-seryl-tRNA(Sec) from L-serine and tRNA(Sec): step 1/1. Its function is as follows. Catalyzes the attachment of serine to tRNA(Ser). Is also able to aminoacylate tRNA(Sec) with serine, to form the misacylated tRNA L-seryl-tRNA(Sec), which will be further converted into selenocysteinyl-tRNA(Sec). This Helicobacter pylori (strain P12) protein is Serine--tRNA ligase.